A 429-amino-acid chain; its full sequence is Proton/sodium-glutamate symport protein (429 aa).

At 1–5 (MKRIK) the chain is on the cytoplasmic side. A helical membrane pass occupies residues 6–26 (FGLATQIFVGLILGVIVGVIW). At 27 to 45 (YGNPALPTYLQPIGDLFLR) the chain is on the extracellular side. The helical transmembrane segment at 46–66 (LIKMIVIPIVVSSLIIGVAGA) threads the bilayer. Over 67-79 (GNGKQVGKLGFRT) the chain is Cytoplasmic. Residues 80 to 100 (ILYFEIITTFAIILGLALANI) traverse the membrane as a helical segment. At 101–150 (FHPGTGVNIHEAQKSDISQYVETEKEQSNKSVAETFLHIVPTNFFQSLVE) the chain is on the extracellular side. Residues 151–171 (GDLLAIICFTVLFALGISAIG) form a helical membrane-spanning segment. Over 172–190 (ERGKPVLAFFEGVSHAMFH) the chain is Cytoplasmic. The chain crosses the membrane as a helical span at residues 191–211 (VVNLVMKVAPFGVFALIGVTV). Residues 212-224 (SKFGLGSLISLGK) are Extracellular-facing. A helical membrane pass occupies residues 225–245 (LVGLVYVALAFFLIVIFGIVA). Residue Lys-246 is a topological domain, cytoplasmic. A helical transmembrane segment spans residues 247 to 267 (IAGISIFKFLAYMKDEILLAF). Residues 268-290 (STSSSETVLPRIMEKMEKIGCPK) lie on the Extracellular side of the membrane. A helical transmembrane segment spans residues 291 to 311 (GIVSFVIPIGYTFNLDGSVLY). The Cytoplasmic portion of the chain corresponds to 312-321 (QSIAALFLAQ). The chain crosses the membrane as a helical span at residues 322–342 (VYGIDLTIWHQITLVLVLMVT). Residues 343–353 (SKGMAAVPGTS) lie on the Extracellular side of the membrane. The helical transmembrane segment at 354-374 (FVVLLATLGTIGVPAEGLAFI) threads the bilayer. Over 375 to 429 (AGVDRIMDMARTVVNLTGNALAAVVMSKWEGMFNPAKAETVMSQSKTEQNATISG) the chain is Cytoplasmic.

The protein belongs to the dicarboxylate/amino acid:cation symporter (DAACS) (TC 2.A.23) family. Homotrimer. Interacts with FloT.

Its subcellular location is the cell membrane. It is found in the membrane raft. Its function is as follows. This carrier protein is part of the Na(+)-dependent, binding-protein-independent glutamate-aspartate transport system. The protein is Proton/sodium-glutamate symport protein (gltT) of Bacillus subtilis (strain 168).